A 298-amino-acid polypeptide reads, in one-letter code: Small ribosomal subunit protein uS2 (298 aa).

Positions 232-298 are disordered; sequence ETFEGDDIPS…TAEAEEPAAE (67 aa). Acidic residues predominate over residues 234–250; it reads FEGDDIPSAIDFEDETP. The span at 251 to 276 shows a compositional bias: low complexity; it reads EPVAEVADAEVAAAEPVAEAAPTAEA.

This sequence belongs to the universal ribosomal protein uS2 family.

This chain is Small ribosomal subunit protein uS2, found in Acaryochloris marina (strain MBIC 11017).